Reading from the N-terminus, the 40-residue chain is Photosystem II reaction center protein J (40 aa).

A helical transmembrane segment spans residues 8–28 (IPLWIVGTVTGILVIGLIGVF).

Belongs to the PsbJ family. In terms of assembly, PSII is composed of 1 copy each of membrane proteins PsbA, PsbB, PsbC, PsbD, PsbE, PsbF, PsbH, PsbI, PsbJ, PsbK, PsbL, PsbM, PsbT, PsbX, PsbY, PsbZ, Psb30/Ycf12, at least 3 peripheral proteins of the oxygen-evolving complex and a large number of cofactors. It forms dimeric complexes.

The protein localises to the plastid. The protein resides in the chloroplast thylakoid membrane. Functionally, one of the components of the core complex of photosystem II (PSII). PSII is a light-driven water:plastoquinone oxidoreductase that uses light energy to abstract electrons from H(2)O, generating O(2) and a proton gradient subsequently used for ATP formation. It consists of a core antenna complex that captures photons, and an electron transfer chain that converts photonic excitation into a charge separation. The sequence is that of Photosystem II reaction center protein J from Coffea arabica (Arabian coffee).